Reading from the N-terminus, the 95-residue chain is Small ribosomal subunit protein uS19 (95 aa).

The protein belongs to the universal ribosomal protein uS19 family.

Functionally, protein S19 forms a complex with S13 that binds strongly to the 16S ribosomal RNA. In Myxococcus xanthus (strain DK1622), this protein is Small ribosomal subunit protein uS19.